Here is a 92-residue protein sequence, read N- to C-terminus: Acylphosphatase (92 aa).

One can recognise an Acylphosphatase-like domain in the interval 6 to 92 (RMYVIVYGIV…TGEFASFDTY (87 aa)). Active-site residues include Arg-21 and Asn-39.

It belongs to the acylphosphatase family.

It catalyses the reaction an acyl phosphate + H2O = a carboxylate + phosphate + H(+). The chain is Acylphosphatase (acyP) from Sulfolobus acidocaldarius (strain ATCC 33909 / DSM 639 / JCM 8929 / NBRC 15157 / NCIMB 11770).